Consider the following 313-residue polypeptide: 2,3-dihydroxyphenylpropionate/2,3-dihydroxicinnamic acid 1,2-dioxygenase (313 aa).

The Proton donor role is filled by histidine 116. Histidine 180 functions as the Proton acceptor in the catalytic mechanism.

It belongs to the LigB/MhpB extradiol dioxygenase family. As to quaternary structure, homotetramer. It depends on Fe(2+) as a cofactor.

It catalyses the reaction 3-(2,3-dihydroxyphenyl)propanoate + O2 = (2Z,4E)-2-hydroxy-6-oxonona-2,4-dienedioate + H(+). The catalysed reaction is (2E)-3-(2,3-dihydroxyphenyl)prop-2-enoate + O2 = (2Z,4E,7E)-2-hydroxy-6-oxonona-2,4,7-trienedioate + H(+). Its pathway is aromatic compound metabolism; 3-phenylpropanoate degradation. In terms of biological role, catalyzes the non-heme iron(II)-dependent oxidative cleavage of 2,3-dihydroxyphenylpropionic acid and 2,3-dihydroxicinnamic acid into 2-hydroxy-6-ketononadienedioate and 2-hydroxy-6-ketononatrienedioate, respectively. The polypeptide is 2,3-dihydroxyphenylpropionate/2,3-dihydroxicinnamic acid 1,2-dioxygenase (Mycobacterium sp. (strain MCS)).